The sequence spans 462 residues: A-type ATP synthase subunit B (462 aa).

The protein belongs to the ATPase alpha/beta chains family. Has multiple subunits with at least A(3), B(3), C, D, E, F, H, I and proteolipid K(x).

The protein resides in the cell membrane. Component of the A-type ATP synthase that produces ATP from ADP in the presence of a proton gradient across the membrane. The B chain is a regulatory subunit. The sequence is that of A-type ATP synthase subunit B from Methanococcus maripaludis (strain C6 / ATCC BAA-1332).